The primary structure comprises 339 residues: ATP-dependent 6-phosphofructokinase (339 aa).

Residues glycine 11, 72-73 (RY), and 102-105 (GDGS) each bind ATP. Mg(2+) is bound at residue aspartate 103. Substrate-binding positions include 125 to 127 (TID), arginine 162, and 169 to 171 (MGR). The active-site Proton acceptor is aspartate 127. Residues 185–187 (GAD) and 214–216 (KSH) contribute to the ADP site. Substrate contacts are provided by residues glutamate 223, arginine 245, and 251 to 254 (HVIR).

Belongs to the phosphofructokinase type A (PFKA) family. ATP-dependent PFK group I subfamily. Prokaryotic clade 'B1' sub-subfamily. In terms of assembly, homotetramer. It depends on Mg(2+) as a cofactor.

It is found in the cytoplasm. The catalysed reaction is beta-D-fructose 6-phosphate + ATP = beta-D-fructose 1,6-bisphosphate + ADP + H(+). It functions in the pathway carbohydrate degradation; glycolysis; D-glyceraldehyde 3-phosphate and glycerone phosphate from D-glucose: step 3/4. Allosterically activated by ADP and other diphosphonucleosides, and allosterically inhibited by phosphoenolpyruvate. Its function is as follows. Catalyzes the phosphorylation of D-fructose 6-phosphate to fructose 1,6-bisphosphate by ATP, the first committing step of glycolysis. The polypeptide is ATP-dependent 6-phosphofructokinase (Streptococcus thermophilus (strain ATCC BAA-491 / LMD-9)).